We begin with the raw amino-acid sequence, 637 residues long: Threonine--tRNA ligase (637 aa).

The TGS domain maps to 1 to 61 (MLNITLPDCS…VEDSAVQIIT (61 aa)). The catalytic stretch occupies residues 242–533 (DHRKLGKQLD…LIENHAGSFP (292 aa)). Residues Cys-333, His-384, and His-510 each contribute to the Zn(2+) site.

The protein belongs to the class-II aminoacyl-tRNA synthetase family. In terms of assembly, homodimer. The cofactor is Zn(2+).

It localises to the cytoplasm. It carries out the reaction tRNA(Thr) + L-threonine + ATP = L-threonyl-tRNA(Thr) + AMP + diphosphate + H(+). Catalyzes the attachment of threonine to tRNA(Thr) in a two-step reaction: L-threonine is first activated by ATP to form Thr-AMP and then transferred to the acceptor end of tRNA(Thr). Also edits incorrectly charged L-seryl-tRNA(Thr). The sequence is that of Threonine--tRNA ligase from Neisseria gonorrhoeae (strain ATCC 700825 / FA 1090).